Here is a 385-residue protein sequence, read N- to C-terminus: uncharacterized protein (385 aa).

Transmembrane regions (helical) follow at residues 12 to 32, 50 to 70, 90 to 110, 132 to 152, 195 to 215, 233 to 253, 272 to 292, 312 to 332, and 335 to 355; these read GVAILGILLLNISAFGLPKAA, WAFLDLIGQVKFLTLFALLFG, LLVLLGFIHGLLFWDGDILLA, FNTGVMLYLVGLGVLLLLGLI, LALGAQYGWQLAGMMLIGAAL, TGFVLVAIGVTINLPAIALQW, LSAPFQAIGYASLFYGFWPQL, YLLQTLICTTLFYHLGLFMHF, and LELLAFVIPVWLANILFSVIW.

The protein to B.subtilis YxaH and YrkO.

The protein resides in the cell membrane. Functionally, involved in transport. This is an uncharacterized protein from Escherichia coli (strain K12).